An 825-amino-acid chain; its full sequence is NT-3 growth factor receptor (825 aa).

Positions 1 to 31 are cleaved as a signal peptide; sequence MDVSLCPAKCSFWRIFLLGSVWLDYVGSVLA. Intrachain disulfides connect cysteine 32–cysteine 38 and cysteine 36–cysteine 45. At 32-429 the chain is on the extracellular side; the sequence is CPANCVCSKT…TVTHKPEEDT (398 aa). N-linked (GlcNAc...) asparagine glycans are attached at residues asparagine 68, asparagine 72, and asparagine 79. LRR repeat units lie at residues 104-125 and 128-149; these read GLQK…AFAK and HLRY…LFQT. N-linked (GlcNAc...) asparagine glycosylation is found at asparagine 133 and asparagine 163. An LRRCT domain is found at 160 to 209; the sequence is NFFNCSCDIRWMQLWQEQGEAKLNNQNLYCINADGSQLPLFRMNISQCDL. Cystine bridges form between cysteine 164–cysteine 189 and cysteine 166–cysteine 207. Residues asparagine 203, asparagine 218, asparagine 232, asparagine 259, asparagine 267, asparagine 272, and asparagine 294 are each glycosylated (N-linked (GlcNAc...) asparagine). Ig-like C2-type domains follow at residues 210-300 and 309-382; these read PEIS…VALT and SLEE…IAKN. Cysteine 231 and cysteine 284 are joined by a disulfide. A disulfide bond links cysteine 320 and cysteine 362. Asparagine 375 and asparagine 388 each carry an N-linked (GlcNAc...) asparagine glycan. Residues 430–453 form a helical membrane-spanning segment; it reads FGVSIAVGLAAFACVLLVVLFIMI. Topologically, residues 454–825 are cytoplasmic; that stretch reads NKYGRRSKFG…ATPIYLDILG (372 aa). The residue at position 493 (serine 493) is a Phosphoserine. Tyrosine 516 carries the post-translational modification Phosphotyrosine; by autocatalysis. The Protein kinase domain occupies 538–825; sequence IVLKRELGEG…ATPIYLDILG (288 aa). ATP-binding positions include 544–552 and lysine 572; that span reads LGEGAFGKV. Aspartate 679 (proton acceptor) is an active-site residue. Residues tyrosine 705, tyrosine 709, and tyrosine 710 each carry the phosphotyrosine; by autocatalysis modification.

The protein belongs to the protein kinase superfamily. Tyr protein kinase family. Insulin receptor subfamily. In terms of assembly, exists in a dynamic equilibrium between monomeric (low affinity) and dimeric (high affinity) structures. Binds SH2B2. Interacts with SQSTM1 and KIDINS220. Interacts with PTPRS. Interacts with MAPK8IP3/JIP3. In terms of processing, ligand-mediated auto-phosphorylation.

It is found in the membrane. The catalysed reaction is L-tyrosyl-[protein] + ATP = O-phospho-L-tyrosyl-[protein] + ADP + H(+). Receptor tyrosine kinase involved in nervous system and probably heart development. Upon binding of its ligand NTF3/neurotrophin-3, NTRK3 autophosphorylates and activates different signaling pathways, including the phosphatidylinositol 3-kinase/AKT and the MAPK pathways, that control cell survival and differentiation. This Macaca fascicularis (Crab-eating macaque) protein is NT-3 growth factor receptor (NTRK3).